We begin with the raw amino-acid sequence, 154 residues long: SsrA-binding protein (154 aa).

A disordered region spans residues 134–154 (KRQAIKERQTQREIQRELKER).

It belongs to the SmpB family.

The protein resides in the cytoplasm. Required for rescue of stalled ribosomes mediated by trans-translation. Binds to transfer-messenger RNA (tmRNA), required for stable association of tmRNA with ribosomes. tmRNA and SmpB together mimic tRNA shape, replacing the anticodon stem-loop with SmpB. tmRNA is encoded by the ssrA gene; the 2 termini fold to resemble tRNA(Ala) and it encodes a 'tag peptide', a short internal open reading frame. During trans-translation Ala-aminoacylated tmRNA acts like a tRNA, entering the A-site of stalled ribosomes, displacing the stalled mRNA. The ribosome then switches to translate the ORF on the tmRNA; the nascent peptide is terminated with the 'tag peptide' encoded by the tmRNA and targeted for degradation. The ribosome is freed to recommence translation, which seems to be the essential function of trans-translation. In Synechococcus sp. (strain JA-2-3B'a(2-13)) (Cyanobacteria bacterium Yellowstone B-Prime), this protein is SsrA-binding protein.